We begin with the raw amino-acid sequence, 154 residues long: SsrA-binding protein (154 aa).

The tract at residues 131–154 (DKRQDLKQKEAKRDIERAFKERQQ) is disordered. Basic and acidic residues predominate over residues 132–154 (KRQDLKQKEAKRDIERAFKERQQ).

The protein belongs to the SmpB family.

It is found in the cytoplasm. In terms of biological role, required for rescue of stalled ribosomes mediated by trans-translation. Binds to transfer-messenger RNA (tmRNA), required for stable association of tmRNA with ribosomes. tmRNA and SmpB together mimic tRNA shape, replacing the anticodon stem-loop with SmpB. tmRNA is encoded by the ssrA gene; the 2 termini fold to resemble tRNA(Ala) and it encodes a 'tag peptide', a short internal open reading frame. During trans-translation Ala-aminoacylated tmRNA acts like a tRNA, entering the A-site of stalled ribosomes, displacing the stalled mRNA. The ribosome then switches to translate the ORF on the tmRNA; the nascent peptide is terminated with the 'tag peptide' encoded by the tmRNA and targeted for degradation. The ribosome is freed to recommence translation, which seems to be the essential function of trans-translation. This chain is SsrA-binding protein, found in Listeria innocua serovar 6a (strain ATCC BAA-680 / CLIP 11262).